A 289-amino-acid polypeptide reads, in one-letter code: G1/S-specific cyclin-D2 (289 aa).

The Cyclin N-terminal domain maps to 26–151; sequence LQNLLTIEER…VLGKLKWNLA (126 aa). The tract at residues 264-289 is disordered; the sequence is QHNAGSKSVEDPDQATTPTDVRDVDL. S271 bears the Phosphoserine mark. A Phosphothreonine modification is found at T280.

This sequence belongs to the cyclin family. Cyclin D subfamily. As to quaternary structure, interacts with either CDK4 or CDK6 protein kinase to form a serine/threonine kinase holoenzyme complex. The cyclin subunit imparts substrate specificity to the complex. Phosphorylation at Thr-280 by MAP kinases is required for ubiquitination and degradation by the DCX(AMBRA1) complex. In terms of processing, ubiquitinated by the DCX(AMBRA1) complex during the transition from G1 to S cell phase, leading to its degradation: ubiquitination is dependent on Thr-280 phosphorylation. The DCX(AMBRA1) complex represents the major regulator of CCND2 stability during the G1/S transition. Polyubiquitinated by the SCF(FBXL2) complex, leading to proteasomal degradation.

The protein localises to the nucleus. It localises to the cytoplasm. The protein resides in the nucleus membrane. Regulatory component of the cyclin D2-CDK4 (DC) complex that phosphorylates and inhibits members of the retinoblastoma (RB) protein family including RB1 and regulates the cell-cycle during G(1)/S transition. Phosphorylation of RB1 allows dissociation of the transcription factor E2F from the RB/E2F complex and the subsequent transcription of E2F target genes which are responsible for the progression through the G(1) phase. Hypophosphorylates RB1 in early G(1) phase. Cyclin D-CDK4 complexes are major integrators of various mitogenenic and antimitogenic signals. This Mus musculus (Mouse) protein is G1/S-specific cyclin-D2.